We begin with the raw amino-acid sequence, 372 residues long: Probable NADH-dependent flavin oxidoreductase YqiG (372 aa).

It belongs to the NADH:flavin oxidoreductase/NADH oxidase family.

This Bacillus subtilis (strain 168) protein is Probable NADH-dependent flavin oxidoreductase YqiG (yqiG).